Here is a 138-residue protein sequence, read N- to C-terminus: Basic phospholipase A2 ammodytoxin A (138 aa).

The signal sequence occupies residues 1–16 (MRTLWIVAVCLIGVEG). 7 disulfide bridges follow: Cys42-Cys131, Cys44-Cys60, Cys59-Cys111, Cys65-Cys138, Cys66-Cys104, Cys73-Cys97, and Cys91-Cys102. Residues Tyr43, Gly45, and Gly47 each coordinate Ca(2+). The active site involves His63. Asp64 serves as a coordination point for Ca(2+). Residue Asp105 is part of the active site.

It belongs to the phospholipase A2 family. Group II subfamily. D49 sub-subfamily. As to quaternary structure, monomer. Binds to calmodulin, coagulation factor X (F10), M-type PLA2 receptor (R-180). May also bind to 14-3-3 proteins gamma (YWHAG) and epsilon (YWHAE), and R25, a mitochondrial membrane protein. Ca(2+) is required as a cofactor. In terms of tissue distribution, expressed by the venom gland.

It localises to the secreted. The protein resides in the host cytoplasm. Its subcellular location is the host cytosol. The catalysed reaction is a 1,2-diacyl-sn-glycero-3-phosphocholine + H2O = a 1-acyl-sn-glycero-3-phosphocholine + a fatty acid + H(+). Functionally, snake venom phospholipase A2 (PLA2) that acts as a presynaptic neurotoxin, an inhibitor of blood coagulation, and has been found to bind with high affinity to intracellular proteins. The response of indirectly stimulated neuromuscular preparations to ammodytoxin (Atx) is triphasic. The first phase, the transient inhibition of the acetylcholine (ACh) release, starts soon after the addition of Atx and lasts for several minutes. This phase is probably independent of Atx enzymatic activity. The effect may be due to the specific binding of the toxin to presynaptic receptors. These receptors, called N-type receptors, are still unidentified. It is noteworthy that a neuronal isoform of the M-type PLA2 receptor (R180) has been identified as a high-affinity receptor for Atx in neuronal plasma membranes. It was demonstrated however that this receptor is not essential for expression of neurotoxicity by Atx. The second phase corresponds to an augmentation of neurotransmitter release. A peak is reached 10-20 minutes after exposure of the preparation to Atx and is followed by a gradual reduction. In this phase, the enzymatic activity of Atx of the mammalian is not significant. It is speculated that the increased release of neurotransmitter in this phase is induced by the interference of Atx with voltage-gated potassium channels. Measurements of ionic currents showed however that voltage-gated potassium channels are not affected by Atx. The third phase of the response of neuromuscular preparations to Atx, which corresponds to a complete and irreversible paralysis, is clearly dependent on the hydrolytic activity of the toxin. In addition to its presynaptic neurotoxicity, Atx shows an anticoagulant activity by binding with high affinity to activated coagulation factor X (F10) thus inhibiting the formation of the prothrombinase complex (FX/FV) and its activity (IC(50) is 20 nM). Surprisingly, Atx was discovered to bind intracellular proteins such as calmodulin (CaM) (IC(50) is 6 nM), 14-3-3 proteins gamma (YWHAG) and epsilon (YWHAE) (by similarity with AtxC), as well as R25 (by similarity with AtxC), a mitochondrial integral membrane protein found in cerebral cortex. These findings raised a doubt about the dogma of the exclusively extracellular action of PLA2s, defended by the potential instability of these molecules in the reducing environment of the eukaryotic cytosol coupled with their possible inability to act as enzymes in this cellular compartment, due to too low concentration of calcium ions. This hypothesis was challenged efficiently by demonstrating the internalization of AtxA into a culture cells, but still remains to be directly demonstrated in vivo. PLA2 catalyzes the calcium-dependent hydrolysis of the 2-acyl groups in 3-sn-phosphoglycerides. This is Basic phospholipase A2 ammodytoxin A from Vipera ammodytes ammodytes (Western sand viper).